We begin with the raw amino-acid sequence, 922 residues long: Coronin-7 (922 aa).

4 WD repeats span residues 75–115 (CHSD…EALP), 124–163 (PEEL…PLTE), 166–205 (AHKD…QASQ), and 209–253 (AHEN…SALA). The tract at residues 419-467 (DTDLSEGFSSPSSLMSPSTPSSLGPSLSSTSGIGTSPSQRSLQSLLGPS) is disordered. A compositionally biased stretch (low complexity) spans 427–456 (SSPSSLMSPSTPSSLGPSLSSTSGIGTSPS). Phosphoserine occurs at positions 459 and 462. Residue Lys-469 forms a Glycyl lysine isopeptide (Lys-Gly) (interchain with G-Cter in ubiquitin) linkage. WD repeat units follow at residues 539–581 (QNGT…NVLT), 589–629 (GHTE…ERLK), 632–671 (GHQD…LPLQ), and 725–765 (DVAP…PFFL). Residues 858–922 (GMTPVSQAPR…FEGVDEDEWD (65 aa)) form a disordered region. Positions 881-893 (LEEKSDQQKKEEL) are enriched in basic and acidic residues. Residue Ser-912 is modified to Phosphoserine.

This sequence belongs to the WD repeat coronin family. Interacts with clathrin adapter AP1 complex. This interaction takes place at Golgi membranes and not AP1-positive endosomal membranes. Interacts (when ubiquitinated at Lys-469) with EPS15. In terms of processing, the membrane-associated form is phosphorylated on tyrosine residues. Ubiquitinated via 'Lys-33'-linked ubiquitin chains by the BCR(KLHL20) E3 ubiquitin ligase complex: 'Lys-33'-linked ubiquitination promotes interaction with EPS15 and facilitates actin polymerization at the trans-Golgi network, thereby facilitating post-Golgi trafficking. Deubiquitinated by ZRANB1/TRABID. In the adult, widely expressed with highest levels in brain, thymus and kidney and low levels in skeletal and heart muscle. Not expressed in lung. In the eye, strongly expressed in the outer plexiform layer of the retina. In the intestine, expressed both in terminally differentiated epithelial cells and in crypt epithelium. In the embryo, strongest expression is seen in brain, thymus, intestine, apical epidermal layers of the skin and developing lens fibers of the eye.

It is found in the golgi apparatus membrane. The protein localises to the golgi apparatus. It localises to the trans-Golgi network. Its subcellular location is the cytoplasmic vesicle. The protein resides in the cytoplasm. It is found in the cytosol. Functionally, F-actin regulator involved in anterograde Golgi to endosome transport: upon ubiquitination via 'Lys-33'-linked ubiquitin chains by the BCR(KLHL20) E3 ubiquitin ligase complex, interacts with EPS15 and localizes to the trans-Golgi network, where it promotes actin polymerization, thereby facilitating post-Golgi trafficking. May play a role in the maintenance of the Golgi apparatus morphology. The chain is Coronin-7 (Coro7) from Mus musculus (Mouse).